Here is a 375-residue protein sequence, read N- to C-terminus: ELAV-like protein 2 (375 aa).

RRM domains lie at 67–145, 153–233, and 292–370; these read TNLI…YARP, ANLY…FANN, and WCIF…FKTS.

This sequence belongs to the RRM elav family. Part of a ribonucleoprotein (RNP) complex, at least composed of elavl1/elrA and/or elavl2/elrB, igf2bp3/vg1RBP, ddx6/Xp54, ybx2/frgy2, lsm14b/rap55b and, in a subset of RNP complexes, stau1/staufen. Binds RNA as a homooligomer.

The protein localises to the cytoplasm. It is found in the cell cortex. Its function is as follows. Binds to poly-U elements and AU-rich elements (AREs) in the 3'-UTR of target mRNAs. Required for the vegetal localization of vg1 mRNA. Probably required for nervous system development. This chain is ELAV-like protein 2, found in Xenopus tropicalis (Western clawed frog).